The sequence spans 345 residues: Transmembrane protein 144 homolog (345 aa).

The next 10 membrane-spanning stretches (helical) occupy residues 3 to 23, 32 to 52, 61 to 81, 84 to 104, 120 to 140, 193 to 213, 233 to 253, 265 to 285, 293 to 313, and 324 to 344; these read IAVG…MFVP, GIFV…VVYS, PLAM…VPIM, IGIG…GWAA, PFLN…FSQI, LAII…VPVI, VFSH…GYVI, LVGP…SWFV, AVSF…WSVF, and LRLL…VGVS.

The protein belongs to the TMEM144 family.

It is found in the membrane. The chain is Transmembrane protein 144 homolog from Caenorhabditis elegans.